A 171-amino-acid chain; its full sequence is 3-hydroxydecanoyl-[acyl-carrier-protein] dehydratase (171 aa).

His-71 is a catalytic residue.

This sequence belongs to the thioester dehydratase family. FabA subfamily. As to quaternary structure, homodimer.

It localises to the cytoplasm. It catalyses the reaction a (3R)-hydroxyacyl-[ACP] = a (2E)-enoyl-[ACP] + H2O. It carries out the reaction (3R)-hydroxydecanoyl-[ACP] = (2E)-decenoyl-[ACP] + H2O. The catalysed reaction is (2E)-decenoyl-[ACP] = (3Z)-decenoyl-[ACP]. It functions in the pathway lipid metabolism; fatty acid biosynthesis. Necessary for the introduction of cis unsaturation into fatty acids. Catalyzes the dehydration of (3R)-3-hydroxydecanoyl-ACP to E-(2)-decenoyl-ACP and then its isomerization to Z-(3)-decenoyl-ACP. Can catalyze the dehydratase reaction for beta-hydroxyacyl-ACPs with saturated chain lengths up to 16:0, being most active on intermediate chain length. In Hamiltonella defensa subsp. Acyrthosiphon pisum (strain 5AT), this protein is 3-hydroxydecanoyl-[acyl-carrier-protein] dehydratase.